Reading from the N-terminus, the 99-residue chain is Acylphosphatase-2 (99 aa).

Serine 2 carries the N-acetylserine modification. The Acylphosphatase-like domain occupies serine 9 to tyrosine 99. Residues arginine 24 and asparagine 42 contribute to the active site. Residue serine 93 is modified to Phosphoserine.

Belongs to the acylphosphatase family.

The enzyme catalyses an acyl phosphate + H2O = a carboxylate + phosphate + H(+). Its function is as follows. Its physiological role is not yet clear. The chain is Acylphosphatase-2 (ACYP2) from Cavia porcellus (Guinea pig).